The chain runs to 130 residues: D-ribose pyranase (130 aa).

Residue H20 is the Proton donor of the active site. Substrate is bound by residues D28, H97, and 119-121 (YSN).

This sequence belongs to the RbsD / FucU family. RbsD subfamily. In terms of assembly, homodecamer.

Its subcellular location is the cytoplasm. It catalyses the reaction beta-D-ribopyranose = beta-D-ribofuranose. It participates in carbohydrate metabolism; D-ribose degradation; D-ribose 5-phosphate from beta-D-ribopyranose: step 1/2. In terms of biological role, catalyzes the interconversion of beta-pyran and beta-furan forms of D-ribose. The polypeptide is D-ribose pyranase (Lacticaseibacillus casei (strain BL23) (Lactobacillus casei)).